The sequence spans 96 residues: Prokineticin Bv8-like peptide 2 (96 aa).

A signal peptide spans 1-19 (MKCFAQIVVLLLVIAFSHG). 5 cysteine pairs are disulfide-bonded: cysteine 26–cysteine 38, cysteine 32–cysteine 50, cysteine 37–cysteine 78, cysteine 60–cysteine 86, and cysteine 80–cysteine 95.

The protein belongs to the AVIT (prokineticin) family. Expressed by the skin glands.

Its subcellular location is the secreted. Functionally, potent agonist for both PKR1/PROKR1 and PKR2/PROKR2, and inducer of a potent and long-lasting hyperalgesia. Also potentiates capsaicin-induced TRPV1 current when tested on DRG neurons. At subnanomolar concentrations, this protein both induces potent chemotaxis of macrophages and stimulates LPS-induced production of the pro-inflammatory cytokines IL-1 and IL-12. In vivo, potently stimulates the contraction of the guinea-pig gastrointestinal (GI) smooth muscle (nanomolar concentration) and rabbit aortic rings. In Bombina maxima (Giant fire-bellied toad), this protein is Prokineticin Bv8-like peptide 2.